The following is a 464-amino-acid chain: Vacuolar protein sorting-associated protein atg6 (464 aa).

The interval 38 to 57 (SLTEMNESGESDDQMNSSSE) is disordered. The stretch at 144-274 (VECAELLTEE…NSRKLEKLQK (131 aa)) forms a coiled coil. The tract at residues 275–461 (MNVFSDIFYI…EAYVSSQDKQ (187 aa)) is BARA.

This sequence belongs to the beclin family. In terms of assembly, component of the autophagy-specific vps34 PI3-kinase complex I composed of vps15, atg6, pik3/vps34, atg14 and atg38. Also a component of the vps34 PI3-kinase complex II composed of atg6, pik3, vps15 and vps38.

The protein resides in the endosome membrane. The protein localises to the vacuole membrane. It is found in the preautophagosomal structure membrane. It localises to the cytoplasm. Its function is as follows. Functions as a part of the autophagy-specific VPS34 PI3-kinase complex I that plays a role in autophagosome assembly. This complex is essential to recruit the atg8-phosphatidylinositol conjugate and the atg12-atg5 conjugate to the pre-autophagosomal structure. Also functions as part of the VPS34 PI3-kinase complex II. The polypeptide is Vacuolar protein sorting-associated protein atg6 (atg6) (Schizosaccharomyces pombe (strain 972 / ATCC 24843) (Fission yeast)).